Here is a 327-residue protein sequence, read N- to C-terminus: Putative HTH-type transcriptional regulatory protein MmarC6_0210 (327 aa).

Positions 128–183 constitute an HTH cro/C1-type domain; that stretch reads LRETREKLKISVGELAEISRVSRKTIYKYEQNEANPSAEVAIKIEEYLDVPLIKGI. Positions 139–158 form a DNA-binding region, H-T-H motif; that stretch reads VGELAEISRVSRKTIYKYEQ.

In Methanococcus maripaludis (strain C6 / ATCC BAA-1332), this protein is Putative HTH-type transcriptional regulatory protein MmarC6_0210.